We begin with the raw amino-acid sequence, 340 residues long: MSAYTAPSQIAQRQLDYFNGKHVLVAGEVEDLFPLELAEHCESVSVFTSNYSYFRQIRAHSTITSYFGSQLEADSQADLLLLYWPKAKAEAEYLLAMLLAKLGSGCEIVVVGENRSGVKSIEKMFQAYGPVNKYDSARRCSFYWGQCNTQPNAFNQADWFRHYSINIHGQQLEIQSLPGVFSHGEFDLGSQLLLETLPSLSGKVLDFGCGAGVIGAFMAKRNPAIELEMCDINAYALASSEATLAANGLQGRVFASDIYSDTADDYRFIISNPPFHSGLDTNYKAAETLLGQAPQYLNKQGELIIVANSFLKYPPIIEQAFSNCATLNKTNKFSIYHASK.

This sequence belongs to the methyltransferase superfamily. RsmC family. Monomer.

The protein localises to the cytoplasm. The enzyme catalyses guanosine(1207) in 16S rRNA + S-adenosyl-L-methionine = N(2)-methylguanosine(1207) in 16S rRNA + S-adenosyl-L-homocysteine + H(+). In terms of biological role, specifically methylates the guanine in position 1207 of 16S rRNA in the 30S particle. This chain is Ribosomal RNA small subunit methyltransferase C, found in Vibrio vulnificus (strain CMCP6).